A 208-amino-acid chain; its full sequence is Small ribosomal subunit protein uS4 (208 aa).

In terms of domain architecture, S4 RNA-binding spans 98 to 166 (SRLDNVVYRM…VKEAIEASRN (69 aa)).

This sequence belongs to the universal ribosomal protein uS4 family. In terms of assembly, part of the 30S ribosomal subunit. Contacts protein S5. The interaction surface between S4 and S5 is involved in control of translational fidelity.

Its function is as follows. One of the primary rRNA binding proteins, it binds directly to 16S rRNA where it nucleates assembly of the body of the 30S subunit. With S5 and S12 plays an important role in translational accuracy. This chain is Small ribosomal subunit protein uS4, found in Kosmotoga olearia (strain ATCC BAA-1733 / DSM 21960 / TBF 19.5.1).